The chain runs to 635 residues: Interferon-induced GTP-binding protein Mx2 (635 aa).

Residues 31–304 enclose the Dynamin-type G domain; that stretch reads DLALPAIAVI…LVQHIEKSMP (274 aa). The tract at residues 41–48 is G1 motif; that stretch reads GDQSSGKS. 41-48 serves as a coordination point for GTP; sequence GDQSSGKS. The tract at residues 66–68 is G2 motif; sequence VTR. The tract at residues 142 to 145 is G3 motif; the sequence is DLPG. Residues 142–146 and 211–214 each bind GTP; these read DLPGI and TKPD. The segment at 211 to 214 is G4 motif; it reads TKPD. Positions 243–246 are G5 motif; that stretch reads KCRG. Residues 549 to 635 enclose the GED domain; the sequence is LREMMLHLKS…MKAHNYLVEF (87 aa).

The protein belongs to the TRAFAC class dynamin-like GTPase superfamily. Dynamin/Fzo/YdjA family.

The protein localises to the nucleus. The protein resides in the cytoplasm. In terms of biological role, does not inhibit strain RB-1 of the fish pathogen, infectious hematopoietic necrosis virus (IHNV). This Oncorhynchus mykiss (Rainbow trout) protein is Interferon-induced GTP-binding protein Mx2.